We begin with the raw amino-acid sequence, 221 residues long: uncharacterized protein (221 aa).

Positions 1 to 11 (MGEKSRRKGPA) are enriched in basic residues. 2 disordered regions span residues 1–23 (MGEK…GRTC) and 139–169 (SNFQ…SAPE). Composition is skewed to basic and acidic residues over residues 13–23 (RHADGKLGRTC) and 155–168 (DKRS…RSAP).

This is an uncharacterized protein from Homo sapiens (Human).